A 239-amino-acid polypeptide reads, in one-letter code: MKLSTIFTAFAATIATVAGYETTGSKQTVDILIDYIIKETPELSQNDVANWENGDTVTLQYVVNNNEESEITVVGVTGQFKNPVNNEIVTNLTTGKVGPIAVPPGEAIKFDQKINVDLIPANYELIPYVFIAQDSLIKVIPCRGQLATIVDAAVSFFDPRLIFLELVLLITFAGLIYVGYEIWGKQYFKGVAPVKAKKVSAAKASSPVASGPSTTSATGYDTNWIPESHLKQKKTKKVN.

The first 19 residues, 1–19, serve as a signal peptide directing secretion; the sequence is MKLSTIFTAFAATIATVAG. Over 20–161 the chain is Lumenal; the sequence is YETTGSKQTV…AAVSFFDPRL (142 aa). A helical membrane pass occupies residues 162 to 182; it reads IFLELVLLITFAGLIYVGYEI. The Cytoplasmic segment spans residues 183–239; it reads WGKQYFKGVAPVKAKKVSAAKASSPVASGPSTTSATGYDTNWIPESHLKQKKTKKVN. Residues 201–213 are compositionally biased toward low complexity; that stretch reads AAKASSPVASGPS. A disordered region spans residues 201-222; the sequence is AAKASSPVASGPSTTSATGYDT.

It belongs to the IRC22 family.

It localises to the endoplasmic reticulum membrane. Is probably involved in a pathway contributing to genomic integrity. The chain is Increased recombination centers protein 22-1 (IRC22-1) from Candida albicans (strain SC5314 / ATCC MYA-2876) (Yeast).